The sequence spans 154 residues: uncharacterized protein (154 aa).

The next 3 helical transmembrane spans lie at 26-48 (VSGW…GVVT), 97-119 (IAMF…LIVF), and 132-150 (GLYT…YCAW).

It is found in the cell membrane. This is an uncharacterized protein from Archaeoglobus fulgidus (strain ATCC 49558 / DSM 4304 / JCM 9628 / NBRC 100126 / VC-16).